Here is a 468-residue protein sequence, read N- to C-terminus: Tissue alpha-L-fucosidase (468 aa).

The signal sequence occupies residues Met-1 to Ala-22. At Thr-173 the chain carries Phosphothreonine. N-linked (GlcNAc...) asparagine glycosylation is found at Asn-244, Asn-271, and Asn-320.

The protein belongs to the glycosyl hydrolase 29 family. In terms of assembly, homotetramer.

It localises to the lysosome. It carries out the reaction an alpha-L-fucoside + H2O = L-fucose + an alcohol. The catalysed reaction is a neolactoside IV(2)-alpha-Fuc-nLc4Cer(d18:1(4E)) + H2O = a neolactoside nLc4Cer(d18:1(4E)) + L-fucose. It catalyses the reaction a neolactoside IV(2)-alpha-Fuc-nLc4Cer(d18:0) + H2O = a neolactoside nLc4Cer(d18:0) + L-fucose. In terms of biological role, alpha-L-fucosidase is responsible for hydrolyzing the alpha-1,6-linked fucose joined to the reducing-end N-acetylglucosamine of the carbohydrate moieties of glycoproteins. The chain is Tissue alpha-L-fucosidase (FUCA1) from Bos taurus (Bovine).